Reading from the N-terminus, the 416-residue chain is MKEIEYVQDLCSRAKKASKVLKQLSSSKKNKVLLSLADLLEKRKAEILLANELDLKDGKEKKLSSALMDRLLLNEKRIFSMASAVREIAALPDPIGEVTRGITLPNGLELVTRRVPLGVVMVIYESRPNVTIDVGALSFKSGNACILRGGSEAFYSNEILIKLFHEILIKEEIDIGSVVFVDKTDRSFMIPFFQQTSLIDIVVPRGGEGLIRFVSENSKIPVVKHDKGVCNLYIDQDADPEKVIPIVINSKVQRPGVCNSTENLILHNGYPFRKELLEALAKEGVELLLDPSSLALYPNGKPVKEQDYLEEFLDLRLSVKTVSSLEEALAFIEKTSSGHTEAIVTEDLNTARIFTNSLDSAALFINCSTRFHDGGEFGLGAEVGISTGKLHVRGPMGLVHLTTTTTYVTGNGQIRG.

The protein belongs to the gamma-glutamyl phosphate reductase family.

Its subcellular location is the cytoplasm. The catalysed reaction is L-glutamate 5-semialdehyde + phosphate + NADP(+) = L-glutamyl 5-phosphate + NADPH + H(+). Its pathway is amino-acid biosynthesis; L-proline biosynthesis; L-glutamate 5-semialdehyde from L-glutamate: step 2/2. Functionally, catalyzes the NADPH-dependent reduction of L-glutamate 5-phosphate into L-glutamate 5-semialdehyde and phosphate. The product spontaneously undergoes cyclization to form 1-pyrroline-5-carboxylate. This is Gamma-glutamyl phosphate reductase from Leptospira interrogans serogroup Icterohaemorrhagiae serovar Lai (strain 56601).